The chain runs to 589 residues: Complement component C8 beta chain (589 aa).

Positions 1 to 31 are cleaved as a signal peptide; sequence MKTGAQVWRALAKSCLLCAALGCLHLPGARG. Residues 32-53 constitute a propeptide that is removed on maturation; it reads EKPDFFETNAVNGSLVRSRPVR. An N-linked (GlcNAc...) asparagine glycan is attached at Asn-43. The TSP type-1 1 domain occupies 63 to 116; that stretch reads DCQLSTWSSWTACDPCQKKRYRHTYLLRPSQFYGELCDFSDKEVEDCVTNRACR. 7 cysteine pairs are disulfide-bonded: Cys-64-Cys-99, Cys-75-Cys-109, Cys-78-Cys-115, Cys-121-Cys-132, Cys-126-Cys-145, Cys-139-Cys-154, and Cys-161-Cys-199. C-linked (Man) tryptophan glycosylation is found at Trp-69 and Trp-72. Residues 120–155 form the LDL-receptor class A domain; sequence RCEGFVCAQTGRCVNRRLLCNGDNDCGDQSDEANCR. Leu-137, Asn-140, Asp-142, Asp-144, Asp-150, and Glu-151 together coordinate Ca(2+). Residues 157–503 form the MACPF domain; the sequence is IYKKCSQDME…EFQMEVSSCR (347 aa). N-linked (GlcNAc...) asparagine glycosylation occurs at Asn-242. Transmembrane regions (beta stranded) follow at residues 251–258, 261–268, 378–385, and 391–398; these read SSFKFGFK, GLVEFGVR, AGGGFQIG, and VYLKLGVS. The cysteines at positions 377 and 402 are disulfide-linked. Phosphothreonine is present on Thr-417. 4 disulfides stabilise this stretch: Cys-502–Cys-549, Cys-504–Cys-520, Cys-507–Cys-522, and Cys-524–Cys-533. The EGF-like domain occupies 504–534; the sequence is CAPCRNNGVPILKESRCECICPAGFQGVACE. The 44-residue stretch at 544–587 folds into the TSP type-1 2 domain; that stretch reads DGKWSCWSDWSPCSGGRKTRQRQCNNPAPQRGGSPCSGPASETL. 2 C-linked (Man) tryptophan glycosylation sites follow: Trp-550 and Trp-553. Cys-556 and Cys-589 are joined by a disulfide. The disordered stretch occupies residues 556 to 589; it reads CSGGRKTRQRQCNNPAPQRGGSPCSGPASETLDC.

It belongs to the complement C6/C7/C8/C9 family. Heterotrimer of 3 chains: alpha (C8A), beta (C8B) and gamma (C8G); the alpha and gamma chains are disulfide bonded. Component of the membrane attack complex (MAC), composed of complement C5b, C6, C7, C8A, C8B, C8G and multiple copies of the pore-forming subunit C9. Post-translationally, N-glycosylated; contains one or two bound glycans. Not O-glycosylated.

It is found in the secreted. Its subcellular location is the target cell membrane. Membrane attack complex (MAC) assembly is inhibited by CD59, thereby protecting self-cells from damage during complement activation. CD59 acts by binding to the beta-haipins of C8 (C8A and C8B), forming an intermolecular beta-sheet that prevents incorporation of the multiple copies of C9 required for complete formation of the osmolytic pore. MAC assembly is also inhibited by clusterin (CLU) chaperones that inhibit polymerization of C9. Functionally, component of the membrane attack complex (MAC), a multiprotein complex activated by the complement cascade, which inserts into a target cell membrane and forms a pore, leading to target cell membrane rupture and cell lysis. The MAC is initiated by proteolytic cleavage of C5 into complement C5b in response to the classical, alternative, lectin and GZMK complement pathways. The complement pathways consist in a cascade of proteins that leads to phagocytosis and breakdown of pathogens and signaling that strengthens the adaptive immune system. C8B, together with C8A and C8G, inserts into the target membrane, but does not form pores by itself. During MAC assembly, associates with C5b, C6 and C7 to form the C5b8 intermediate complex that inserts into the target membrane and traverses the bilayer increasing membrane rigidity. This is Complement component C8 beta chain (C8b) from Rattus norvegicus (Rat).